A 625-amino-acid chain; its full sequence is Cysteine-rich receptor-like protein kinase 46 (625 aa).

The N-terminal stretch at 1–23 (MASTLISSLAVVLPLTLLAPSMS) is a signal peptide. At 24–252 (MKISRIDVLG…LLAMSFTKEN (229 aa)) the chain is on the extracellular side. 2 Gnk2-homologous domains span residues 29–130 (IDVL…NYSF) and 135–237 (VSHQ…NYTF). 4 N-linked (GlcNAc...) asparagine glycosylation sites follow: Asn-38, Asn-127, Asn-234, and Asn-252. A helical membrane pass occupies residues 253 to 273 (LTYIFVISMVGVLAIAAGFWC). Topologically, residues 274–625 (GKCFYMRTSP…TKPPFLHDSM (352 aa)) are cytoplasmic. In terms of domain architecture, Protein kinase spans 331 to 621 (FNESCKLGVG…LPTPTKPPFL (291 aa)). ATP-binding positions include 337–345 (LGVGGYGEV) and Lys-359. Tyr-404 is modified (phosphotyrosine). The Proton acceptor role is filled by Asp-454. At Ser-458 the chain carries Phosphoserine. Thr-499 carries the phosphothreonine modification. Tyr-507 bears the Phosphotyrosine mark.

It belongs to the protein kinase superfamily. Ser/Thr protein kinase family. CRK subfamily.

Its subcellular location is the membrane. The enzyme catalyses L-seryl-[protein] + ATP = O-phospho-L-seryl-[protein] + ADP + H(+). It carries out the reaction L-threonyl-[protein] + ATP = O-phospho-L-threonyl-[protein] + ADP + H(+). This is Cysteine-rich receptor-like protein kinase 46 from Arabidopsis thaliana (Mouse-ear cress).